The primary structure comprises 512 residues: Putative UDP-glucuronosyltransferase ugt-55 (512 aa).

A signal peptide spans 1–22; it reads MQLLTLPTLIFIFLNYGTPCLS. A helical membrane pass occupies residues 487–507; it reads ILLYLDSIAMFTLTLLTMILI.

This sequence belongs to the UDP-glycosyltransferase family.

The protein resides in the membrane. The catalysed reaction is glucuronate acceptor + UDP-alpha-D-glucuronate = acceptor beta-D-glucuronoside + UDP + H(+). This Caenorhabditis elegans protein is Putative UDP-glucuronosyltransferase ugt-55 (ugt-55).